Consider the following 172-residue polypeptide: 6,7-dimethyl-8-ribityllumazine synthase (172 aa).

5-amino-6-(D-ribitylamino)uracil contacts are provided by residues phenylalanine 24, 58–60 (ALE), and 82–84 (AVI). 87-88 (ET) contacts (2S)-2-hydroxy-3-oxobutyl phosphate. The active-site Proton donor is histidine 90. Asparagine 115 lines the 5-amino-6-(D-ribitylamino)uracil pocket. Arginine 129 lines the (2S)-2-hydroxy-3-oxobutyl phosphate pocket. The disordered stretch occupies residues 150-172 (ALDQLGDDDEDEEEDEDDEEERA). Acidic residues predominate over residues 154-172 (LGDDDEDEEEDEDDEEERA).

This sequence belongs to the DMRL synthase family.

The enzyme catalyses (2S)-2-hydroxy-3-oxobutyl phosphate + 5-amino-6-(D-ribitylamino)uracil = 6,7-dimethyl-8-(1-D-ribityl)lumazine + phosphate + 2 H2O + H(+). It participates in cofactor biosynthesis; riboflavin biosynthesis; riboflavin from 2-hydroxy-3-oxobutyl phosphate and 5-amino-6-(D-ribitylamino)uracil: step 1/2. Catalyzes the formation of 6,7-dimethyl-8-ribityllumazine by condensation of 5-amino-6-(D-ribitylamino)uracil with 3,4-dihydroxy-2-butanone 4-phosphate. This is the penultimate step in the biosynthesis of riboflavin. In Burkholderia multivorans (strain ATCC 17616 / 249), this protein is 6,7-dimethyl-8-ribityllumazine synthase.